A 231-amino-acid chain; its full sequence is Small ribosomal subunit protein uS2 (231 aa).

Positions 1–23 (MKVTNLSEKEERGGELTEAEKEE) are disordered. Positions 7–23 (SEKEERGGELTEAEKEE) are enriched in basic and acidic residues.

The protein belongs to the universal ribosomal protein uS2 family.

The protein is Small ribosomal subunit protein uS2 (rps2) of Saccharolobus solfataricus (strain ATCC 35092 / DSM 1617 / JCM 11322 / P2) (Sulfolobus solfataricus).